Reading from the N-terminus, the 279-residue chain is Ribosomal RNA small subunit methyltransferase A (279 aa).

Residues Asn28, Leu30, Gly55, Glu77, Asp103, and Asn122 each contribute to the S-adenosyl-L-methionine site.

Belongs to the class I-like SAM-binding methyltransferase superfamily. rRNA adenine N(6)-methyltransferase family. RsmA subfamily.

The protein localises to the cytoplasm. It catalyses the reaction adenosine(1518)/adenosine(1519) in 16S rRNA + 4 S-adenosyl-L-methionine = N(6)-dimethyladenosine(1518)/N(6)-dimethyladenosine(1519) in 16S rRNA + 4 S-adenosyl-L-homocysteine + 4 H(+). Functionally, specifically dimethylates two adjacent adenosines (A1518 and A1519) in the loop of a conserved hairpin near the 3'-end of 16S rRNA in the 30S particle. May play a critical role in biogenesis of 30S subunits. This is Ribosomal RNA small subunit methyltransferase A from Ruegeria pomeroyi (strain ATCC 700808 / DSM 15171 / DSS-3) (Silicibacter pomeroyi).